The following is a 322-amino-acid chain: 4-hydroxy-3-methylbut-2-enyl diphosphate reductase 1 (322 aa).

Residue Cys-18 coordinates [4Fe-4S] cluster. 2 residues coordinate (2E)-4-hydroxy-3-methylbut-2-enyl diphosphate: His-47 and His-82. The dimethylallyl diphosphate site is built by His-47 and His-82. Positions 47 and 82 each coordinate isopentenyl diphosphate. Cys-104 contributes to the [4Fe-4S] cluster binding site. His-132 is a (2E)-4-hydroxy-3-methylbut-2-enyl diphosphate binding site. Residue His-132 coordinates dimethylallyl diphosphate. His-132 provides a ligand contact to isopentenyl diphosphate. Glu-134 (proton donor) is an active-site residue. Residue Thr-173 coordinates (2E)-4-hydroxy-3-methylbut-2-enyl diphosphate. Cys-203 contacts [4Fe-4S] cluster. Residues Ser-231, Ser-232, Asn-233, and Ser-276 each contribute to the (2E)-4-hydroxy-3-methylbut-2-enyl diphosphate site. 4 residues coordinate dimethylallyl diphosphate: Ser-231, Ser-232, Asn-233, and Ser-276. Isopentenyl diphosphate-binding residues include Ser-231, Ser-232, Asn-233, and Ser-276.

The protein belongs to the IspH family. [4Fe-4S] cluster is required as a cofactor.

It catalyses the reaction isopentenyl diphosphate + 2 oxidized [2Fe-2S]-[ferredoxin] + H2O = (2E)-4-hydroxy-3-methylbut-2-enyl diphosphate + 2 reduced [2Fe-2S]-[ferredoxin] + 2 H(+). It carries out the reaction dimethylallyl diphosphate + 2 oxidized [2Fe-2S]-[ferredoxin] + H2O = (2E)-4-hydroxy-3-methylbut-2-enyl diphosphate + 2 reduced [2Fe-2S]-[ferredoxin] + 2 H(+). Its pathway is isoprenoid biosynthesis; dimethylallyl diphosphate biosynthesis; dimethylallyl diphosphate from (2E)-4-hydroxy-3-methylbutenyl diphosphate: step 1/1. It participates in isoprenoid biosynthesis; isopentenyl diphosphate biosynthesis via DXP pathway; isopentenyl diphosphate from 1-deoxy-D-xylulose 5-phosphate: step 6/6. Catalyzes the conversion of 1-hydroxy-2-methyl-2-(E)-butenyl 4-diphosphate (HMBPP) into a mixture of isopentenyl diphosphate (IPP) and dimethylallyl diphosphate (DMAPP). Acts in the terminal step of the DOXP/MEP pathway for isoprenoid precursor biosynthesis. This Bradyrhizobium diazoefficiens (strain JCM 10833 / BCRC 13528 / IAM 13628 / NBRC 14792 / USDA 110) protein is 4-hydroxy-3-methylbut-2-enyl diphosphate reductase 1.